We begin with the raw amino-acid sequence, 207 residues long: Small heat shock protein hspG7 (207 aa).

The 178-residue stretch at K30–N207 folds into the sHSP domain. Low complexity-rich tracts occupy residues Q84–T101 and S122–T135. Residues Q84–D149 are disordered. The span at K136–D149 shows a compositional bias: basic and acidic residues.

The protein belongs to the small heat shock protein (HSP20) family.

This is Small heat shock protein hspG7 (hspG7) from Dictyostelium discoideum (Social amoeba).